We begin with the raw amino-acid sequence, 377 residues long: NAC domain-containing protein 76 (377 aa).

One can recognise an NAC domain in the interval 10–159 (VPPGFRFHPT…GWVVCRAFKK (150 aa)). The DNA-binding element occupies 110 to 165 (IGMRKTLVFYKGRAPNGQKTDWIMHEYRLESDENAPPQEEGWVVCRAFKKKPMTGQ). Residues 312–347 (GVSGFGGHHEEDNNKIGHYNNEESNNKGSVETASST) form a disordered region. Positions 318–336 (GHHEEDNNKIGHYNNEESN) are enriched in basic and acidic residues. Residues 337-347 (NKGSVETASST) show a composition bias toward polar residues.

Belongs to the plant vascular related NAC-domain protein family. Interacts with NAC030/VND7. In terms of tissue distribution, detected in root protoxylem and metaxylem poles and in vessels of protoxylems, outermost metaxylems, inner metaxylems, shoots and hypocotyls. Expressed in roots, hypocotyls, cotyledons and leaves. Present in developing xylems. Specifically expressed in vessels but not in interfascicular fibers in stems.

The protein resides in the nucleus. In terms of biological role, transcription activator that binds to the secondary wall NAC binding element (SNBE), 5'-(T/A)NN(C/T)(T/C/G)TNNNNNNNA(A/C)GN(A/C/T)(A/T)-3', in the promoter of target genes. Involved in xylem formation by promoting the expression of secondary wall-associated transcription factors and of genes involved in secondary wall biosynthesis and programmed cell death, genes driven by the secondary wall NAC binding element (SNBE). Triggers thickening of secondary walls. This is NAC domain-containing protein 76 from Arabidopsis thaliana (Mouse-ear cress).